The sequence spans 293 residues: MITVYFIGTGGGAPNKRGLPAIMVRREGFDALFDCGEGTQWRMMEHNLSFMKIKLIGITHMHGDHVLGLPGMIETMGMYSRKESLLLMGPKELKEFLEDIFKKTYFYPNFEIQIIDKYEDENIKISTFETCHTIESQGYLFEEKDRLKIDIDKLRKEGIKDWRIIRMLKEGKRVEINGKVLLPEDYLIVKKGIRIAYTGDTGPCEKVINAVKDVDLLIHDSTFIDEKEAYKYGHSNSYDAAYVALKANVKRLALFHISPRYDDTYEMLIKAKRIFEKTFVAEPLSYYIIRQKE.

His60, His62, Asp64, His65, His132, Asp200, and His256 together coordinate Zn(2+). Residue Asp64 is the Proton acceptor of the active site.

It belongs to the RNase Z family. Homodimer. Requires Zn(2+) as cofactor.

It catalyses the reaction Endonucleolytic cleavage of RNA, removing extra 3' nucleotides from tRNA precursor, generating 3' termini of tRNAs. A 3'-hydroxy group is left at the tRNA terminus and a 5'-phosphoryl group is left at the trailer molecule.. In terms of biological role, zinc phosphodiesterase, which displays some tRNA 3'-processing endonuclease activity. Probably involved in tRNA maturation, by removing a 3'-trailer from precursor tRNA. The chain is Ribonuclease Z from Sulfurisphaera tokodaii (strain DSM 16993 / JCM 10545 / NBRC 100140 / 7) (Sulfolobus tokodaii).